The chain runs to 110 residues: uncharacterized protein (110 aa).

The span at 1 to 16 (MSVKLKYDKIDQRNGD) shows a compositional bias: basic and acidic residues. 2 disordered regions span residues 1–29 (MSVK…GNGN) and 73–100 (IKQQ…ESPN). Residues 20–29 (GNHNNCGNGN) show a composition bias toward low complexity.

This is an uncharacterized protein from Dictyostelium discoideum (Social amoeba).